The following is a 152-amino-acid chain: uncharacterized protein (152 aa).

The Cytoplasmic segment spans residues 1-5 (MWFPQ). A helical transmembrane segment spans residues 6–26 (IIAGMAAGGAASAMTPGKVLF). Over 27–38 (TNALGLGCSRSR) the chain is Extracellular. Residues 39 to 59 (GLFLEMFGTAVLCFTVLMTAV) form a helical membrane-spanning segment. The Cytoplasmic segment spans residues 60–65 (EKRETN). A helical membrane pass occupies residues 66 to 86 (FMAALPIGISLFMAHMALTGY). Residues 87-110 (TGTGVNPARSLGAAVAARYFPHYH) lie on the Extracellular side of the membrane. The NPA signature appears at 92–94 (NPA). Residues 111 to 131 (WIYWISPLLGAFLAWSVWQLL) form a helical membrane-spanning segment. The Cytoplasmic segment spans residues 132–152 (QILDYTTYVNAEKAAGQKKED).

The protein belongs to the MIP/aquaporin (TC 1.A.8) family.

Its subcellular location is the membrane. This is an uncharacterized protein from Saccharomyces cerevisiae (strain YJM789) (Baker's yeast).